Consider the following 662-residue polypeptide: DNA ligase (662 aa).

NAD(+) contacts are provided by residues 31–35 (DKDYD) and 79–80 (SL). Residue Lys121 is the N6-AMP-lysine intermediate of the active site. NAD(+) is bound by residues Arg143, Glu177, and Lys313. Positions 406, 409, 422, and 428 each coordinate Zn(2+). The region spanning 586-662 (VLESPFMGKT…LSEEEFENMI (77 aa)) is the BRCT domain.

Belongs to the NAD-dependent DNA ligase family. LigA subfamily. Mg(2+) is required as a cofactor. Requires Mn(2+) as cofactor.

The catalysed reaction is NAD(+) + (deoxyribonucleotide)n-3'-hydroxyl + 5'-phospho-(deoxyribonucleotide)m = (deoxyribonucleotide)n+m + AMP + beta-nicotinamide D-nucleotide.. DNA ligase that catalyzes the formation of phosphodiester linkages between 5'-phosphoryl and 3'-hydroxyl groups in double-stranded DNA using NAD as a coenzyme and as the energy source for the reaction. It is essential for DNA replication and repair of damaged DNA. The protein is DNA ligase of Clostridium perfringens (strain ATCC 13124 / DSM 756 / JCM 1290 / NCIMB 6125 / NCTC 8237 / Type A).